The chain runs to 405 residues: Tryptophan synthase beta chain (405 aa).

Lysine 98 is modified (N6-(pyridoxal phosphate)lysine).

This sequence belongs to the TrpB family. In terms of assembly, tetramer of two alpha and two beta chains. It depends on pyridoxal 5'-phosphate as a cofactor.

The enzyme catalyses (1S,2R)-1-C-(indol-3-yl)glycerol 3-phosphate + L-serine = D-glyceraldehyde 3-phosphate + L-tryptophan + H2O. The protein operates within amino-acid biosynthesis; L-tryptophan biosynthesis; L-tryptophan from chorismate: step 5/5. In terms of biological role, the beta subunit is responsible for the synthesis of L-tryptophan from indole and L-serine. The polypeptide is Tryptophan synthase beta chain (Xanthomonas oryzae pv. oryzae (strain PXO99A)).